A 439-amino-acid chain; its full sequence is Methionine aminopeptidase 2-2 (439 aa).

Positions 1 to 90 are disordered; it reads MAAQAPPTDE…SQLFPDKQYP (90 aa). Residues 10–23 are compositionally biased toward basic and acidic residues; sequence ELSKLSVEDADNKP. Over residues 35-45 the composition is skewed to acidic residues; that stretch reads DEDDSEDDAED. Residues 54-68 show a composition bias toward basic residues; it reads AKKKKKRKPRKKKKN. Position 192 (H192) interacts with substrate. Residues D212, D223, and H292 each contribute to the a divalent metal cation site. Residue H300 coordinates substrate. Positions 325 and 420 each coordinate a divalent metal cation.

The protein belongs to the peptidase M24A family. Methionine aminopeptidase eukaryotic type 2 subfamily. Requires Co(2+) as cofactor. It depends on Zn(2+) as a cofactor. Mn(2+) is required as a cofactor. Fe(2+) serves as cofactor.

The protein localises to the cytoplasm. It catalyses the reaction Release of N-terminal amino acids, preferentially methionine, from peptides and arylamides.. In terms of biological role, cotranslationally removes the N-terminal methionine from nascent proteins. The N-terminal methionine is often cleaved when the second residue in the primary sequence is small and uncharged (Met-Ala-, Cys, Gly, Pro, Ser, Thr, or Val). This Chaetomium globosum (strain ATCC 6205 / CBS 148.51 / DSM 1962 / NBRC 6347 / NRRL 1970) (Soil fungus) protein is Methionine aminopeptidase 2-2.